An 86-amino-acid chain; its full sequence is Large ribosomal subunit protein uL23 (86 aa).

The protein belongs to the universal ribosomal protein uL23 family. Part of the 50S ribosomal subunit. Contacts protein L29.

Functionally, binds to 23S rRNA. One of the proteins that surrounds the polypeptide exit tunnel on the outside of the ribosome. The polypeptide is Large ribosomal subunit protein uL23 (Methanococcus aeolicus (strain ATCC BAA-1280 / DSM 17508 / OCM 812 / Nankai-3)).